The primary structure comprises 1005 residues: Myosin IE heavy chain (1005 aa).

The 686-residue stretch at 8–693 (EGVPDFVLLN…TLFYFEEKRE (686 aa)) folds into the Myosin motor domain. 101 to 108 (GESGAGKT) contacts ATP. Positions 539–562 (SDPLVQGLFPPTRPEDSKKRPETA) are disordered. A compositionally biased stretch (basic and acidic residues) spans 551–560 (RPEDSKKRPE). The segment at 556–630 (KKRPETAGSQ…RAGFAGRIEY (75 aa)) is actin-binding. IQ domains lie at 694-722 (LEMP…RKAA) and 716-745 (WNQR…HRAF). The TH1 domain occupies 810–1004 (KKKWDFRRHF…KGNQATIQFK (195 aa)).

The protein belongs to the TRAFAC class myosin-kinesin ATPase superfamily. Myosin family. As to quaternary structure, myosin I heavy chain is single-headed. Dimer of a heavy and a light chain. Inability to self-assemble into filaments.

Functionally, myosin is a protein that binds to actin and has ATPase activity that is activated by actin. May play a role in moving membranes relative to actin. This Dictyostelium discoideum (Social amoeba) protein is Myosin IE heavy chain (myoE).